Consider the following 87-residue polypeptide: Acyl carrier protein 3 (87 aa).

In terms of domain architecture, Carrier spans 1-79; sequence MSNPTVLDQI…DLVTYIEAAL (79 aa). Serine 39 carries the post-translational modification O-(pantetheine 4'-phosphoryl)serine.

It belongs to the acyl carrier protein (ACP) family. In terms of processing, 4'-phosphopantetheine is transferred from CoA to a specific serine of apo-ACP by AcpS. This modification is essential for activity because fatty acids are bound in thioester linkage to the sulfhydryl of the prosthetic group.

It localises to the cytoplasm. It participates in lipid metabolism; fatty acid biosynthesis. Carrier of the growing fatty acid chain in fatty acid biosynthesis. The sequence is that of Acyl carrier protein 3 from Ralstonia nicotianae (strain ATCC BAA-1114 / GMI1000) (Ralstonia solanacearum).